A 151-amino-acid polypeptide reads, in one-letter code: MIIEQVVGNIDNISDEILNKLHLENVFVESSNLVKKVQRVVTDHGREIGICLNGQKDLSPGDILYMDERDIIVLNVIPDDLLVIRPSSLRQMGDIAHKIGNRHIPAQFDEIEMLVQYDYLVEELLKQLEVPYTRENKKVKLAFRHVGHSHG.

This sequence belongs to the UreE family.

It is found in the cytoplasm. In terms of biological role, involved in urease metallocenter assembly. Binds nickel. Probably functions as a nickel donor during metallocenter assembly. The polypeptide is Urease accessory protein UreE (Lachnoclostridium phytofermentans (strain ATCC 700394 / DSM 18823 / ISDg) (Clostridium phytofermentans)).